We begin with the raw amino-acid sequence, 380 residues long: Cytochrome b (380 aa).

4 helical membrane-spanning segments follow: residues 33–53 (FGSL…FLAM), 77–98 (WLIR…YLHI), 113–133 (WNVG…GYVL), and 178–198 (FFAF…LHLL). Heme b-binding residues include His83 and His97. Heme b-binding residues include His182 and His196. Residue His201 coordinates a ubiquinone. 4 helical membrane passes run 226–246 (YKDL…ALFS), 288–308 (LGGV…PILH), 320–340 (FSQI…WIGG), and 347–367 (YIII…VFFP).

This sequence belongs to the cytochrome b family. As to quaternary structure, the cytochrome bc1 complex contains 3 respiratory subunits (MT-CYB, CYC1 and UQCRFS1), 2 core proteins (UQCRC1 and UQCRC2) and probably 6 low-molecular weight proteins. It depends on heme b as a cofactor.

The protein localises to the mitochondrion inner membrane. Component of the ubiquinol-cytochrome c reductase complex (complex III or cytochrome b-c1 complex) that is part of the mitochondrial respiratory chain. The b-c1 complex mediates electron transfer from ubiquinol to cytochrome c. Contributes to the generation of a proton gradient across the mitochondrial membrane that is then used for ATP synthesis. In Apogon semilineatus (Half-lined cardinal), this protein is Cytochrome b (mt-cyb).